The sequence spans 448 residues: uncharacterized protein (448 aa).

An ATP-binding site is contributed by Gly-257–Thr-264.

This is an uncharacterized protein from Methanocaldococcus jannaschii (strain ATCC 43067 / DSM 2661 / JAL-1 / JCM 10045 / NBRC 100440) (Methanococcus jannaschii).